The chain runs to 132 residues: Protein NrdI (132 aa).

This sequence belongs to the NrdI family.

In terms of biological role, probably involved in ribonucleotide reductase function. The chain is Protein NrdI from Agrobacterium fabrum (strain C58 / ATCC 33970) (Agrobacterium tumefaciens (strain C58)).